We begin with the raw amino-acid sequence, 321 residues long: Major immediate early protein (321 aa).

The segment at 86-139 (CSVCLETYSQQSNDTCPFLIPTTCDHGFCFKCVINLQSNAMNIPHSTVCCPLCN) adopts an RING-type zinc-finger fold. The leucine-zipper stretch occupies residues 228–249 (LIEENTRLNEQIQELQHQVRTL).

Its subcellular location is the host nucleus. Functionally, plays some regulatory role in both viral DNA replication and transcriptional transactivation. The chain is Major immediate early protein (PE38) from Lepidoptera (butterflies and moths).